The primary structure comprises 495 residues: Cytochrome P450 94C1 (495 aa).

The helical transmembrane segment at 2 to 22 (LLIISFTIVSFFFIIIFSLFH) threads the bilayer. Cysteine 439 is a binding site for heme.

It belongs to the cytochrome P450 family. The cofactor is heme.

The protein localises to the membrane. It localises to the endoplasmic reticulum membrane. It carries out the reaction a 12-hydroxyjasmonyl-L-alpha-amino acid + 2 reduced [NADPH--hemoprotein reductase] + 2 O2 = a 12-hydroxy-12-oxojasmonyl-L-alpha-amino acid + 2 oxidized [NADPH--hemoprotein reductase] + 3 H2O + 3 H(+). Its function is as follows. Involved in the oxidation of the plant hormone jasmonoyl-L-isoleucine (JA-Ile), a bioactive phytohormone of the jasmonate-mediated signaling pathway. Converts 12-hydroxy-JA-Ile (12OH-JA-Ile) to the carboxy-derivative 12COOH-JA-Ile. Exerts negative feedback control on JA-Ile levels and plays a role in attenuation of jasmonate responses. Also functions as in-chain fatty acids hydroxylase in vitro. Catalyzes the hydroxylation of 12-hydroxy-jasmonoyl-L-phenylalanine (12OH-JA-Phe) in vitro. Converts 12OH-JA-Phe to the carboxy-derivative 12COOH-JA-Phe. The sequence is that of Cytochrome P450 94C1 from Arabidopsis thaliana (Mouse-ear cress).